Here is a 25-residue protein sequence, read N- to C-terminus: Snaclec bothroalternin subunit alpha/beta (25 aa).

Positions 1–25 (DCPSDWSNHEGHCYRVFNEWMNWAD) constitute a C-type lectin domain. Cysteine 2 and cysteine 13 are joined by a disulfide.

Belongs to the snaclec family. Heterodimer of subunits alpha and beta; disulfide-linked. As to expression, expressed by the venom gland.

It is found in the secreted. Thrombin (F2) inhibitor that inhibits aggregation of rabbit platelets induced by alpha-thrombin. This Bothrops alternatus (Urutu) protein is Snaclec bothroalternin subunit alpha/beta.